A 621-amino-acid polypeptide reads, in one-letter code: EEIVPGPKSRYRIKVEGKKHTLIIEGATKADSAEYSVMTTGGQSSAKLSVDLRPLKITTPLTDQTVKLGKEVCLKCEISENVPGKWTKNGLPVQEGERLKVVHKGRIHKLVIANALIEDEGEYVFTPDAITVPLVCQIHVIDPPKIILDGLEADNTVTVIAGSKLRLEIPVTGEPPPKAIWSRADKAIMEGSGRIRAESYPDSSTLVIDVAERDDSGVYNINLKNEAGEAHASIKLRLWISLILRLAPNVTEVGDDWCIMNWEPPVYDGGSPILGYFIERKKKQSSRWMRLNFDLCKETTFEPKKMIEGVAYEVRIFAVNAIGISKPSMPSKPFVPLAVTSPPTLLAVDSVTDSSVTMKWRPPDQIGAAGLSGYVLEYCFEGSTSAKQSNENGEAANDLPAEDWSLQTQTGSTRPKFTITGLPTDAKIFVRVKAINAAGASETKYYSQPILVKEIIEPPKIRIPRHLKQTYIRRVGEAVNLVIPFQGKPRPELTWKKDGAEIDKNQINIRNSETDTIIFIRKAERSHSGKYDLEVKVDKYVENASIDIQIVDRPGPPQAVTIEDVWGENVALTWTPPKDDGNAAITGYTIQKADKKSMEWFAVIEHYHRTNATITELVIGN.

Ig-like C2-type domains follow at residues 1 to 53, 54 to 142, and 144 to 241; these read EEIV…VDLR, PLKI…HVID, and PKII…LWIS. Thr28 bears the Phosphothreonine mark. Ser233 is subject to Phosphoserine. Fibronectin type-III domains follow at residues 244-343, 344-459, and 556-621; these read LRLA…TSPP, TLLA…IEPP, and PPQA…VIGN. Thr420 bears the Phosphothreonine mark. Tyr445 carries the phosphotyrosine modification. Residues 459 to 553 form the Ig-like C2-type 4 domain; sequence PKIRIPRHLK…ASIDIQIVDR (95 aa).

This sequence belongs to the immunoglobulin superfamily. MyBP family. Interacts with USP25 (isoform USP25m only); the interaction prevents proteasomal degradation of MYBPC1.

Functionally, thick filament-associated protein located in the crossbridge region of vertebrate striated muscle a bands. Slow skeletal protein that binds to both myosin and actin. In vitro, binds to native thin filaments and modifies the activity of actin-activated myosin ATPase. May modulate muscle contraction or may play a more structural role. This chain is Myosin-binding protein C, slow-type (Mybpc1), found in Rattus norvegicus (Rat).